The chain runs to 332 residues: GTPase Obg (332 aa).

The 159-residue stretch at 1–159 folds into the Obg domain; that stretch reads MKFLDQAKIY…RWVWLRLKLI (159 aa). The OBG-type G domain maps to 160 to 328; that stretch reads ADAGLVGLPN…VLRETLRMIR (169 aa). Residues 166 to 173, 191 to 195, 213 to 216, 280 to 283, and 309 to 311 each bind GTP; these read GLPNAGKS, FTTLH, DIPG, NKMD, and SAA. Residues S173 and T193 each coordinate Mg(2+).

It belongs to the TRAFAC class OBG-HflX-like GTPase superfamily. OBG GTPase family. In terms of assembly, monomer. The cofactor is Mg(2+).

The protein resides in the cytoplasm. Its function is as follows. An essential GTPase which binds GTP, GDP and possibly (p)ppGpp with moderate affinity, with high nucleotide exchange rates and a fairly low GTP hydrolysis rate. Plays a role in control of the cell cycle, stress response, ribosome biogenesis and in those bacteria that undergo differentiation, in morphogenesis control. This is GTPase Obg from Acidiphilium cryptum (strain JF-5).